A 586-amino-acid chain; its full sequence is METHLGWARSLEAVLSDRSALDAFQEWLIEYSSPQYLDLFFAIRAYERMALEGKPEKSQLSKSIYSKFLSSRTGNCEAIPKHFRAPIGEKLRHGTELEDRVFSHCSNFVQEFLRRQHEEFVGSEEFIEAFNKMSSTTADQLPGGSAHHSSHQNTMRRSSGTTSRKSAAQIATQLTAEALLKSKHDRHSKLGETKLEKMYPPTRQPYVCNATTSHNDSAVSSTFSGDTPEAHRMHSNRLRHIRDEQARENHGTMTLPRVEKASVDGQQWDHSSESGRRNFAMEITRKLLRHIDKVKLNDEMEKRIDDIEECRYTTIDMVNGTEPNDDLGKIDEDEELDDYLKMKMTDDSQKGSTNRSPKGPAGEPNKSGEGSKNTTLSPTNRAPAQLHNTIRVPRRKDYPRDTSASLKSHRHHQIDTNRMMSQSMCAPSYSSASSSYSRDSFAPAPTTRVNFAPGSSKSSQFYDSSGIGSMAPSAFSATSSLDYKDRRQHRKAPTPKKHSKIGKNLSNLITISYLGTDKIPVVTHVPNDGPMTLAEFKRHFALPNGAHQLFFKTECEDGSAPFQLLLIKDEHHLLPVFEGRIAAELR.

The tract at residues 1–135 is required for interaction with apr-1; it reads METHLGWARS…FIEAFNKMSS (135 aa). Residues 10–131 form the RGS domain; sequence SLEAVLSDRS…GSEEFIEAFN (122 aa). 3 disordered regions span residues 137-168, 344-442, and 478-501; these read TADQLPGGSAHHSSHQNTMRRSSGTTSRKSAA, MTDD…DSFA, and TSSLDYKDRRQHRKAPTPKKHSKI. 2 stretches are compositionally biased toward polar residues: residues 151-168 and 368-388; these read HQNTMRRSSGTTSRKSAA and GEGSKNTTLSPTNRAPAQLHN. The segment covering 421–442 has biased composition (low complexity); that stretch reads SQSMCAPSYSSASSSYSRDSFA. Residues 486–501 show a composition bias toward basic residues; that stretch reads RRQHRKAPTPKKHSKI. A DIX domain is found at 505 to 586; that stretch reads LSNLITISYL…FEGRIAAELR (82 aa).

Interacts (via N-terminus) with apr-1 (via C-terminus). Interacts with bar-1 (via ARM repeats), gsk-3, and mig-5. In terms of tissue distribution, expressed in hypodermal cells (seam cells) V5 and V6, Q neuroblasts, ventral hypodermal cells P7/8 to P11/12, body wall muscle cells and neurons in the head, the tail and the ventral nerve cord.

It localises to the cell membrane. The protein resides in the nucleus. Its subcellular location is the cytoplasm. The protein localises to the cell cortex. Works in parallel with axl-1 in negatively regulating bar-1 signaling in vulval precursor cells and Q neuroblasts. Inhibits Wnt signaling, which affects tissue specific expression of Hox genes, egl-5, lin-39 and mab-5. This in turn affects QR (postembryonic neuroblast) cell migration, vulval cell fate specification, and the development of sensory structures by the seam cell lineage. Has a role in alae V cell patterning, ray formation in the male tail and axon guidance. Does not affect B cell polarity. In Caenorhabditis elegans, this protein is Axin-like protein pry-1.